Consider the following 210-residue polypeptide: FMN-dependent NADH:quinone oxidoreductase 9 (210 aa).

FMN is bound by residues serine 10 and 16–18 (SAS).

It belongs to the azoreductase type 1 family. In terms of assembly, homodimer. FMN serves as cofactor.

It carries out the reaction 2 a quinone + NADH + H(+) = 2 a 1,4-benzosemiquinone + NAD(+). The enzyme catalyses N,N-dimethyl-1,4-phenylenediamine + anthranilate + 2 NAD(+) = 2-(4-dimethylaminophenyl)diazenylbenzoate + 2 NADH + 2 H(+). Quinone reductase that provides resistance to thiol-specific stress caused by electrophilic quinones. Functionally, also exhibits azoreductase activity. Catalyzes the reductive cleavage of the azo bond in aromatic azo compounds to the corresponding amines. In Burkholderia lata (strain ATCC 17760 / DSM 23089 / LMG 22485 / NCIMB 9086 / R18194 / 383), this protein is FMN-dependent NADH:quinone oxidoreductase 9.